The following is a 302-amino-acid chain: Putative S-adenosyl-L-methionine-dependent methyltransferase MAV_2803 (302 aa).

Residues aspartate 129 and 158 to 159 (DL) contribute to the S-adenosyl-L-methionine site.

The protein belongs to the UPF0677 family.

Exhibits S-adenosyl-L-methionine-dependent methyltransferase activity. This is Putative S-adenosyl-L-methionine-dependent methyltransferase MAV_2803 from Mycobacterium avium (strain 104).